A 468-amino-acid chain; its full sequence is Protein NEN1 (468 aa).

Residues 11 to 172 (FFDVETTVPK…DDVRMNLEVL (162 aa)) enclose the Exonuclease domain. Aspartate 13 and glutamate 15 together coordinate Mg(2+). Histidine 159 functions as the Proton donor/acceptor in the catalytic mechanism. Aspartate 164 serves as a coordination point for Mg(2+).

It depends on Mg(2+) as a cofactor. As to expression, expressed in the sieve elements and phloem pole pericycle cells.

The protein localises to the cytoplasm. It localises to the nucleus. In terms of biological role, probable exonuclease involved in enuclation of sieve elements. This chain is Protein NEN1, found in Arabidopsis thaliana (Mouse-ear cress).